Consider the following 121-residue polypeptide: uncharacterized protein (121 aa).

This sequence to E.coli YcjD and H.influenzae HI_1162.

This is an uncharacterized protein from Haemophilus influenzae (strain ATCC 51907 / DSM 11121 / KW20 / Rd).